The chain runs to 444 residues: Methylenetetrahydrofolate--tRNA-(uracil-5-)-methyltransferase TrmFO (444 aa).

10–15 is an FAD binding site; the sequence is GAGLAG.

This sequence belongs to the MnmG family. TrmFO subfamily. Requires FAD as cofactor.

The protein localises to the cytoplasm. It catalyses the reaction uridine(54) in tRNA + (6R)-5,10-methylene-5,6,7,8-tetrahydrofolate + NADH + H(+) = 5-methyluridine(54) in tRNA + (6S)-5,6,7,8-tetrahydrofolate + NAD(+). It carries out the reaction uridine(54) in tRNA + (6R)-5,10-methylene-5,6,7,8-tetrahydrofolate + NADPH + H(+) = 5-methyluridine(54) in tRNA + (6S)-5,6,7,8-tetrahydrofolate + NADP(+). Functionally, catalyzes the folate-dependent formation of 5-methyl-uridine at position 54 (M-5-U54) in all tRNAs. The protein is Methylenetetrahydrofolate--tRNA-(uracil-5-)-methyltransferase TrmFO of Streptococcus equi subsp. equi (strain 4047).